The primary structure comprises 762 residues: Endonuclease MutS2 (762 aa).

333–340 (GVNAGGKT) lines the ATP pocket. Positions 688-762 (LDLRGQRSEE…GGSGVKIVKL (75 aa)) constitute a Smr domain.

The protein belongs to the DNA mismatch repair MutS family. MutS2 subfamily. Homodimer. Binds to stalled ribosomes, contacting rRNA.

In terms of biological role, endonuclease that is involved in the suppression of homologous recombination and thus may have a key role in the control of bacterial genetic diversity. Its function is as follows. Acts as a ribosome collision sensor, splitting the ribosome into its 2 subunits. Detects stalled/collided 70S ribosomes which it binds and splits by an ATP-hydrolysis driven conformational change. Acts upstream of the ribosome quality control system (RQC), a ribosome-associated complex that mediates the extraction of incompletely synthesized nascent chains from stalled ribosomes and their subsequent degradation. Probably generates substrates for RQC. This chain is Endonuclease MutS2, found in Helicobacter pylori (strain J99 / ATCC 700824) (Campylobacter pylori J99).